We begin with the raw amino-acid sequence, 132 residues long: Small ribosomal subunit protein uS11 (132 aa).

Belongs to the universal ribosomal protein uS11 family. In terms of assembly, part of the 30S ribosomal subunit. Interacts with proteins S7 and S18. Binds to IF-3.

In terms of biological role, located on the platform of the 30S subunit, it bridges several disparate RNA helices of the 16S rRNA. Forms part of the Shine-Dalgarno cleft in the 70S ribosome. This Chlamydia trachomatis serovar L2 (strain ATCC VR-902B / DSM 19102 / 434/Bu) protein is Small ribosomal subunit protein uS11.